Consider the following 1071-residue polypeptide: SLIT-ROBO Rho GTPase-activating protein 2 (1071 aa).

An F-BAR domain is found at lysine 22–aspartate 325. Residues leucine 181 to threonine 203 are compositionally biased toward basic and acidic residues. Residues leucine 181–alanine 211 form a disordered region. Serine 206 is modified (phosphoserine). Positions valine 362–isoleucine 401 form a coiled coil. Residues serine 427, serine 500, serine 691, and serine 695 each carry the phosphoserine modification. Positions alanine 489 to phenylalanine 679 constitute a Rho-GAP domain. Residues aspartate 698–aspartate 726 form a disordered region. Polar residues predominate over residues glycine 705–valine 717. A Phosphoserine modification is found at serine 724. In terms of domain architecture, SH3 spans cysteine 728–threonine 787. Residue serine 795 is modified to Phosphoserine. The disordered stretch occupies residues glutamine 837–proline 936. Residues histidine 855–serine 866 are compositionally biased toward low complexity. Polar residues-rich tracts occupy residues arginine 874 to leucine 885 and glycine 897 to histidine 907. Phosphoserine is present on serine 916. The span at isoleucine 919–asparagine 933 shows a compositional bias: polar residues. Symmetric dimethylarginine; by PRMT5 is present on arginine 927. Serine 930 is modified (phosphoserine). Positions glutamate 940–lysine 967 form a coiled coil. Residues serine 983–alanine 1012 are disordered. A phosphoserine mark is found at serine 990, serine 994, serine 1013, and serine 1027. The disordered stretch occupies residues lysine 1029–valine 1071. A compositionally biased stretch (polar residues) spans proline 1047–valine 1071.

As to quaternary structure, homodimer. Heterodimer; forms a heterodimer with SRGAP2C, altering SRGAP2 function. Forms a heterooligomer with SRGAP1 and SRGAP3 through its F-BAR domain. Interacts (via SH3 domain) with GPHN. Interacts (via SH3 domain) with FMNL1 (activated by RAC1); regulates the actin filament severing activity of FMNL1 and actin dynamics. Interacts (via SH3 domain) with FMNL3. Interacts with RAC1; specifically stimulates RAC1 GTPase activity. Interacts (via F-BAR domain) with HOMER1. Interacts with ROBO1 and ROBO2. Interacts with FASLG. Interacts with PRMT5. Post-translationally, methylation at Arg-927 is required for the stimulation of cell migration, dimerization and localization at the plasma membrane protrusions.

It is found in the cell membrane. The protein resides in the cell projection. The protein localises to the dendritic spine. It localises to the postsynaptic density. Its subcellular location is the postsynaptic cell membrane. It is found in the lamellipodium. The protein resides in the cytoplasmic vesicle. The protein localises to the phagosome. It localises to the nucleus. Its subcellular location is the cytoplasm. It is found in the cytosol. Activity is strongly inhibited by SRGAP2C, which heterodimerize with SRGAP2/SRGAP2A, thereby reducing SRGAP2/SRGAP2A levels through proteasome-dependent degradation. Postsynaptic RAC1 GTPase activating protein (GAP) that plays a key role in neuronal morphogenesis and migration mainly during development of the cerebral cortex. Regulates excitatory and inhibitory synapse maturation and density in cortical pyramidal neurons. SRGAP2/SRGAP2A limits excitatory and inhibitory synapse density through its RAC1-specific GTPase activating activity, while it promotes maturation of both excitatory and inhibitory synapses through its ability to bind to the postsynaptic scaffolding protein HOMER1 at excitatory synapses, and the postsynaptic protein GPHN at inhibitory synapses. Mechanistically, acts by binding and deforming membranes, thereby regulating actin dynamics to regulate cell migration and differentiation. Promotes cell repulsion and contact inhibition of locomotion: localizes to protrusions with curved edges and controls the duration of RAC1 activity in contact protrusions. In non-neuronal cells, may also play a role in cell migration by regulating the formation of lamellipodia and filopodia. This Homo sapiens (Human) protein is SLIT-ROBO Rho GTPase-activating protein 2.